Here is a 118-residue protein sequence, read N- to C-terminus: Protein TusC (118 aa).

It belongs to the DsrF/TusC family. As to quaternary structure, heterohexamer, formed by a dimer of trimers. The hexameric TusBCD complex contains 2 copies each of TusB, TusC and TusD. The TusBCD complex interacts with TusE.

Its subcellular location is the cytoplasm. In terms of biological role, part of a sulfur-relay system required for 2-thiolation of 5-methylaminomethyl-2-thiouridine (mnm(5)s(2)U) at tRNA wobble positions. This Salmonella typhimurium (strain LT2 / SGSC1412 / ATCC 700720) protein is Protein TusC.